The chain runs to 1307 residues: Rab3 GTPase-activating protein regulatory subunit (1307 aa).

The protein belongs to the Rab3-GAP regulatory subunit family. The Rab3 GTPase-activating complex is a heterodimer composed of rbg-1 and rbg-2.

The protein localises to the cytoplasm. Probable regulatory subunit of a GTPase activating protein that has specificity for Rab3 subfamily. Rab3 proteins are involved in regulated exocytosis of neurotransmitters and hormones. Rab3 GTPase-activating complex specifically converts active Rab3-GTP to the inactive form Rab3-GDP. This chain is Rab3 GTPase-activating protein regulatory subunit (rbg-2), found in Caenorhabditis elegans.